Consider the following 274-residue polypeptide: Peroxiredoxin-4 (274 aa).

The signal sequence occupies residues 1–40 (MEARSKLLDGTTASRRWTRKLVLLLPPLLLFLLRTESLQG). The Thioredoxin domain occupies 82–240 (AKISKPAPYW…TLRLVQAFQY (159 aa)). Residue Cys-127 is the Cysteine sulfenic acid (-SOH) intermediate of the active site.

The protein belongs to the peroxiredoxin family. AhpC/Prx1 subfamily. Homodimer; disulfide-linked, upon oxidation. 5 homodimers assemble to form a ring-like decamer. In terms of processing, the enzyme can be inactivated by further oxidation of the cysteine sulfenic acid (C(P)-SOH) to sulphinic acid (C(P)-SO2H) and sulphonic acid (C(P)-SO3H) instead of its condensation to a disulfide bond.

Its subcellular location is the cytoplasm. The protein resides in the endoplasmic reticulum. The enzyme catalyses a hydroperoxide + [thioredoxin]-dithiol = an alcohol + [thioredoxin]-disulfide + H2O. In terms of biological role, thiol-specific peroxidase that catalyzes the reduction of hydrogen peroxide and organic hydroperoxides to water and alcohols, respectively. Plays a role in cell protection against oxidative stress by detoxifying peroxides and as sensor of hydrogen peroxide-mediated signaling events. Regulates the activation of NF-kappa-B in the cytosol by a modulation of I-kappa-B-alpha phosphorylation. The chain is Peroxiredoxin-4 (Prdx4) from Mus musculus (Mouse).